The chain runs to 304 residues: Acetyl-coenzyme A carboxylase carboxyl transferase subunit beta (304 aa).

The 253-residue stretch at 52-304 folds into the CoA carboxyltransferase N-terminal domain; it reads EVTKCPSCGV…TIFKVLNDII (253 aa). Positions 56, 59, 75, and 78 each coordinate Zn(2+). The segment at 56–78 adopts a C4-type zinc-finger fold; sequence CPSCGVLSHKSEIRANMKMCSNC.

This sequence belongs to the AccD/PCCB family. Acetyl-CoA carboxylase is a heterohexamer composed of biotin carboxyl carrier protein (AccB), biotin carboxylase (AccC) and two subunits each of ACCase subunit alpha (AccA) and ACCase subunit beta (AccD). Zn(2+) is required as a cofactor.

Its subcellular location is the cytoplasm. It catalyses the reaction N(6)-carboxybiotinyl-L-lysyl-[protein] + acetyl-CoA = N(6)-biotinyl-L-lysyl-[protein] + malonyl-CoA. Its pathway is lipid metabolism; malonyl-CoA biosynthesis; malonyl-CoA from acetyl-CoA: step 1/1. In terms of biological role, component of the acetyl coenzyme A carboxylase (ACC) complex. Biotin carboxylase (BC) catalyzes the carboxylation of biotin on its carrier protein (BCCP) and then the CO(2) group is transferred by the transcarboxylase to acetyl-CoA to form malonyl-CoA. The sequence is that of Acetyl-coenzyme A carboxylase carboxyl transferase subunit beta from Fusobacterium nucleatum subsp. nucleatum (strain ATCC 25586 / DSM 15643 / BCRC 10681 / CIP 101130 / JCM 8532 / KCTC 2640 / LMG 13131 / VPI 4355).